A 518-amino-acid chain; its full sequence is Probable G-protein coupled receptor Mth-like 2 (518 aa).

An N-terminal signal peptide occupies residues 1–26 (MIASSKMLLSASILIYFLLNLQSSSA). The Extracellular segment spans residues 27-220 (EIADCSFYDT…CLILPSRTGQ (194 aa)). Intrachain disulfides connect C31/C85, C87/C92, C96/C190, C97/C108, and C152/C211. N47 is a glycosylation site (N-linked (GlcNAc...) asparagine). N-linked (GlcNAc...) asparagine glycosylation is found at N111, N125, and N201. The helical transmembrane segment at 221–241 (TVVMITSLICLVLTIAVYLCV) threads the bilayer. Residues 242-250 (KKLMNLEGK) lie on the Cytoplasmic side of the membrane. The chain crosses the membrane as a helical span at residues 251–271 (CFICYMMCLFFGYLFLLLDLW). Residues 272 to 279 (ELSLDFCK) are Extracellular-facing. A helical transmembrane segment spans residues 280-300 (AAGFLGYFFVMAAFFWLSIIS). Topologically, residues 301–321 (RHYWKCLTNPCASMNIRSERA) are cytoplasmic. Residues 322-342 (FLLYSCFAWAMPLALTGVTYL) traverse the membrane as a helical segment. Residues 343 to 371 (ADNVVNNEEWQPRVGDEGHCWIYTKSWSA) lie on the Extracellular side of the membrane. The chain crosses the membrane as a helical span at residues 372–392 (MVYFYGPMVLLILFNITMFVL). Residues 393-426 (TAKHIIDSKRTLRKIARNEGRIQKLNSDKQNYTQ) are Cytoplasmic-facing. The helical transmembrane segment at 427–447 (FLLLFTVMGMSWSFEIFSYLV) threads the bilayer. Topologically, residues 448 to 455 (QREKLWVN) are extracellular. A helical membrane pass occupies residues 456-476 (IFLVADYFNWSQGVIIFVLFI). Residues 477–518 (LRRKTLVLFKKQIFPKQRAFSRSATQSTIESISQTKRHFNMT) are Cytoplasmic-facing.

The protein belongs to the G-protein coupled receptor 2 family. Mth subfamily.

It is found in the cell membrane. The sequence is that of Probable G-protein coupled receptor Mth-like 2 (mthl2) from Drosophila melanogaster (Fruit fly).